Consider the following 642-residue polypeptide: G protein-coupled receptor kinase 1 (642 aa).

Positions 1 to 202 are N-terminal; it reads MEIENIVANT…LEKRPVDKHT (202 aa). In terms of domain architecture, RGS spans 52–188; sequence YAFVVEKQPI…AESMYFHRFL (137 aa). Positions 203–470 constitute a Protein kinase domain; sequence FRLYRVLGKG…AEEIRAHPFF (268 aa). ATP-binding positions include 209 to 217 and Lys-232; that span reads LGKGGFGEV. Residue Asp-328 is the Proton acceptor of the active site. The AGC-kinase C-terminal domain maps to 480 to 545; sequence EPVPWKKMEA…GCVSIPWQSE (66 aa). The interval 612–642 is disordered; sequence VEQQQPPKTSTQTPAVRSSRAASASGRTLVI. A compositionally biased stretch (low complexity) spans 614 to 636; that stretch reads QQQPPKTSTQTPAVRSSRAASAS.

The protein belongs to the protein kinase superfamily. AGC Ser/Thr protein kinase family. GPRK subfamily.

It catalyses the reaction [G-protein-coupled receptor] + ATP = [G-protein-coupled receptor]-phosphate + ADP + H(+). In terms of biological role, specifically phosphorylates the activated forms of G protein-coupled receptors. This chain is G protein-coupled receptor kinase 1 (grk-1), found in Caenorhabditis elegans.